A 77-amino-acid chain; its full sequence is U8-lycotoxin-Ls1a (77 aa).

The first 20 residues, 1–20 (MKLIIFTGLVLFAIVSLIEA), serve as a signal peptide directing secretion. Residues 21–26 (QAENEK) constitute a propeptide that is removed on maturation.

Belongs to the neurotoxin 19 (CSTX) family. 08 (U8-Lctx) subfamily. In terms of processing, contains 4 disulfide bonds. As to expression, expressed by the venom gland.

Its subcellular location is the secreted. This is U8-lycotoxin-Ls1a from Lycosa singoriensis (Wolf spider).